A 447-amino-acid polypeptide reads, in one-letter code: Tubulin beta chain (447 aa).

Residues Q11, E69, S138, G142, T143, G144, N204, and N226 each contribute to the GTP site. E69 serves as a coordination point for Mg(2+). The interval 424-447 (QYQDAGVDEEEEEYEEEAPLEGEE) is disordered. Over residues 429-447 (GVDEEEEEYEEEAPLEGEE) the composition is skewed to acidic residues.

Belongs to the tubulin family. As to quaternary structure, dimer of alpha and beta chains. A typical microtubule is a hollow water-filled tube with an outer diameter of 25 nm and an inner diameter of 15 nM. Alpha-beta heterodimers associate head-to-tail to form protofilaments running lengthwise along the microtubule wall with the beta-tubulin subunit facing the microtubule plus end conferring a structural polarity. Microtubules usually have 13 protofilaments but different protofilament numbers can be found in some organisms and specialized cells. Mg(2+) serves as cofactor.

Its subcellular location is the cytoplasm. The protein localises to the cytoskeleton. In terms of biological role, tubulin is the major constituent of microtubules, a cylinder consisting of laterally associated linear protofilaments composed of alpha- and beta-tubulin heterodimers. Microtubules grow by the addition of GTP-tubulin dimers to the microtubule end, where a stabilizing cap forms. Below the cap, tubulin dimers are in GDP-bound state, owing to GTPase activity of alpha-tubulin. This chain is Tubulin beta chain (tub-2), found in Neurospora crassa (strain ATCC 24698 / 74-OR23-1A / CBS 708.71 / DSM 1257 / FGSC 987).